Here is a 295-residue protein sequence, read N- to C-terminus: Inositol polyphosphate multikinase IPK2 (295 aa).

The segment at 1–21 (MASDLRPPEHQVAGHRASADK) is disordered.

This sequence belongs to the inositol phosphokinase (IPK) family.

It carries out the reaction 1D-myo-inositol 1,4,5-trisphosphate + 2 ATP = 1D-myo-inositol 1,3,4,5,6-pentakisphosphate + 2 ADP + 2 H(+). The enzyme catalyses 1D-myo-inositol 1,3,4,6-tetrakisphosphate + ATP = 1D-myo-inositol 1,3,4,5,6-pentakisphosphate + ADP + H(+). Its function is as follows. Inositol phosphate kinase with a broad substrate specificity. Phosphorylates inositol 1,4,5-trisphosphate (Ins(1,4,5)P3), inositol 1,4,5,6-tetrakisphosphate (Ins(1,4,5,6)P4), inositol 1,3,4,5-tetrakisphosphate (Ins(1,3,4,5)P4), inositol 1,3,4,6-tetrakisphosphate (Ins(1,3,4,6)P4) and inositol 1,2,3,4,6-pentakisphosphate (Ins(1,2,3,4,6)P5) but not inositol 1,4-bisphosphate (Ins(1,4)P2), inositol 1,3,4-trisphosphate (Ins(1,3,4)P3), inositol 1,2,6-trisphosphate (Ins(1,2,6)P3), inositol 3,4,5,6-tetrakisphosphate (Ins(3,4,5,6)P4), inositol 1,3,4,5,6-pentakisphosphate (Ins(1,3,4,5,6)P5), inositol 1,2,4,5,6-pentakisphosphate (Ins(1,2,4,5,6)P5) or inositol hexakisphosphate (InsP6). Regulates pollen and root development probably through the regulation of InsP3-mediated calcium accumulation. This chain is Inositol polyphosphate multikinase IPK2, found in Oryza sativa subsp. indica (Rice).